We begin with the raw amino-acid sequence, 166 residues long: Specificity protein transcription factor 2 (166 aa).

The tract at residues 17 to 45 (SYHHSLPSISPPDSPASTSASSSSSSIGA) is disordered. A compositionally biased stretch (low complexity) spans 31-42 (PASTSASSSSSS). C2H2-type zinc fingers lie at residues 77 to 101 (HLCSVPGCGKTYKKTSHLRAHLRKH), 107 to 131 (FVCDWFDCGKRFDRSDQLIRHKRTH), and 137 to 160 (FACKFCIRQFSRSDHLQQHLTSVH).

It belongs to the Sp1 C2H2-type zinc-finger protein family.

Its function is as follows. Transcription factor. Probably acts downstream of the Wnt signaling pathway. The sequence is that of Specificity protein transcription factor 2 from Caenorhabditis elegans.